We begin with the raw amino-acid sequence, 447 residues long: Na(+)-translocating NADH-quinone reductase subunit A (447 aa).

Belongs to the NqrA family. As to quaternary structure, composed of six subunits; NqrA, NqrB, NqrC, NqrD, NqrE and NqrF.

The catalysed reaction is a ubiquinone + n Na(+)(in) + NADH + H(+) = a ubiquinol + n Na(+)(out) + NAD(+). Functionally, NQR complex catalyzes the reduction of ubiquinone-1 to ubiquinol by two successive reactions, coupled with the transport of Na(+) ions from the cytoplasm to the periplasm. NqrA to NqrE are probably involved in the second step, the conversion of ubisemiquinone to ubiquinol. This Cellvibrio japonicus (strain Ueda107) (Pseudomonas fluorescens subsp. cellulosa) protein is Na(+)-translocating NADH-quinone reductase subunit A.